Here is a 384-residue protein sequence, read N- to C-terminus: Secreted LysM effector LysM14 (384 aa).

Residues 1–35 form the signal peptide; sequence MGWSPRWKVMLRGIFNAMISIHILLSLLFAHIATA. The LysM domain occupies 64–112; it reads YTYTIQEGDTCAKLAQRYQVTTSNIETWNVGSWGWPGCAKIKQGDFVCL. The tract at residues 185–220 is disordered; it reads STTKSAASKTTTTSNPTTTSKTTITSKPTTTSKPTT.

The protein belongs to the secreted LysM effector family.

It localises to the secreted. Secreted LysM effector that might have a role in sequestration of chitin oligosaccharides (breakdown products of fungal cell walls that are released during invasion and act as triggers of host immunity) to dampen host defense. The sequence is that of Secreted LysM effector LysM14 from Penicillium expansum (Blue mold rot fungus).